A 209-amino-acid polypeptide reads, in one-letter code: Protein Sxy (209 aa).

Belongs to the Sxy/TfoX family.

Functionally, induces low levels of natural DNA uptake by inducing transcription of the competence genes (the CRP-S regulon) required for DNA transformation. Induction of the CRP-S regulon also requires Sxy-activated promoter (CRP-S), cAMP receptor protein (CRP) and cAMP. Induces CRP-S site-containing genes which are involved in genome maintenance and transcription or encoding transposases and toxin-antitoxin pairs. The chain is Protein Sxy from Escherichia coli (strain K12).